The primary structure comprises 299 residues: Transcription elongation factor A protein 2 (299 aa).

The 78-residue stretch at 5–82 (EEIARIARRL…KSWKKLLDVS (78 aa)) folds into the TFIIS N-terminal domain. A Glycyl lysine isopeptide (Lys-Gly) (interchain with G-Cter in ubiquitin) cross-link involves residue lysine 57. Serine 59 and serine 100 each carry phosphoserine. The tract at residues 82-127 (SDGKSRNQGRGTPLPTSSSKDASRTTDLSCKKPDPPRTPSTPRITT) is disordered. Polar residues predominate over residues 87 to 101 (RNQGRGTPLPTSSSK). Basic and acidic residues predominate over residues 102 to 116 (DASRTTDLSCKKPDP). In terms of domain architecture, TFIIS central spans 138 to 254 (VRNKCREMLT…EHQMARTGGT (117 aa)). Residues 257–297 (DLFTCNKCRKKNCTYTQVQTRSSDEPMTTYVVCNECGNRWK) form a TFIIS-type zinc finger. Residues cysteine 261, cysteine 264, cysteine 289, and cysteine 292 each contribute to the Zn(2+) site.

This sequence belongs to the TFS-II family. In terms of assembly, interacts with the basal transcription factor GTF2B. Interacts with REXO1. Testis and ovary specific. Specific to testicular germ cells.

It is found in the nucleus. In terms of biological role, necessary for efficient RNA polymerase II transcription elongation past template-encoded arresting sites. The arresting sites in DNA have the property of trapping a certain fraction of elongating RNA polymerases that pass through, resulting in locked ternary complexes. Cleavage of the nascent transcript by S-II allows the resumption of elongation from the new 3'-terminus. The protein is Transcription elongation factor A protein 2 (Tcea2) of Mus musculus (Mouse).